Here is a 149-residue protein sequence, read N- to C-terminus: FAD synthase (149 aa).

Residues 15–16 (VF), 20–23 (HVGH), and Asp-101 contribute to the ATP site.

It belongs to the archaeal FAD synthase family. Homodimer. It depends on a divalent metal cation as a cofactor.

The enzyme catalyses FMN + ATP + H(+) = FAD + diphosphate. Its pathway is cofactor biosynthesis; FAD biosynthesis; FAD from FMN: step 1/1. Catalyzes the transfer of the AMP portion of ATP to flavin mononucleotide (FMN) to produce flavin adenine dinucleotide (FAD) coenzyme. This Thermococcus kodakarensis (strain ATCC BAA-918 / JCM 12380 / KOD1) (Pyrococcus kodakaraensis (strain KOD1)) protein is FAD synthase.